Here is a 334-residue protein sequence, read N- to C-terminus: F420-dependent glucose-6-phosphate dehydrogenase (334 aa).

Residue aspartate 38 coordinates coenzyme F420-(gamma-Glu)n. Histidine 39 (proton donor) is an active-site residue. Residues threonine 75 and 106–107 each bind coenzyme F420-(gamma-Glu)n; that span reads TG. Catalysis depends on glutamate 108, which acts as the Proton acceptor. Coenzyme F420-(gamma-Glu)n is bound by residues asparagine 111, 175 to 176, and 178 to 179; these read GG and LV. Residues threonine 193, lysine 196, lysine 257, and arginine 281 each coordinate substrate.

It belongs to the F420-dependent glucose-6-phosphate dehydrogenase family. As to quaternary structure, homodimer.

The enzyme catalyses oxidized coenzyme F420-(gamma-L-Glu)(n) + D-glucose 6-phosphate + H(+) = 6-phospho-D-glucono-1,5-lactone + reduced coenzyme F420-(gamma-L-Glu)(n). Its function is as follows. Catalyzes the coenzyme F420-dependent oxidation of glucose 6-phosphate (G6P) to 6-phosphogluconolactone. The chain is F420-dependent glucose-6-phosphate dehydrogenase from Kribbella flavida (strain DSM 17836 / JCM 10339 / NBRC 14399).